We begin with the raw amino-acid sequence, 217 residues long: Uracil-DNA glycosylase (217 aa).

Residue Asp62 is the Proton acceptor of the active site.

It belongs to the uracil-DNA glycosylase (UDG) superfamily. UNG family.

It is found in the cytoplasm. The enzyme catalyses Hydrolyzes single-stranded DNA or mismatched double-stranded DNA and polynucleotides, releasing free uracil.. Excises uracil residues from the DNA which can arise as a result of misincorporation of dUMP residues by DNA polymerase or due to deamination of cytosine. This is Uracil-DNA glycosylase from Streptococcus pyogenes serotype M28 (strain MGAS6180).